The chain runs to 884 residues: Microsomal triglyceride transfer protein large subunit (884 aa).

An N-terminal signal peptide occupies residues 1 to 21 (MMPVAGLLLCVTAVLCTSALG). Residues 26 to 660 (LDNGKLYRYS…QSNNALLHGL (635 aa)) enclose the Vitellogenin domain. Cys172 and Cys192 form a disulfide bridge. Asn348 carries N-linked (GlcNAc...) asparagine glycosylation. Cysteines 438 and 443 form a disulfide. N-linked (GlcNAc...) asparagine glycosylation is present at Asn787.

Heterodimer; heterodimerizes with the protein disulfide isomerase. As to expression, highest expression in the proximal part of the anterior intestine. Lower expression in the distal part of the anterior intestine, in the posterior portion of the intestinal tube and liver. Very low expression levels in heart, brain, ovary, testis and kidney.

The protein resides in the endoplasmic reticulum. It localises to the golgi apparatus. It catalyses the reaction a 1,2-diacyl-sn-glycero-3-phosphocholine(in) = a 1,2-diacyl-sn-glycero-3-phosphocholine(out). It carries out the reaction a 1,2-diacyl-sn-glycero-3-phosphoethanolamine(in) = a 1,2-diacyl-sn-glycero-3-phosphoethanolamine(out). The enzyme catalyses a cholesterol ester(in) = a cholesterol ester(out). The catalysed reaction is a triacyl-sn-glycerol(in) = a triacyl-sn-glycerol(out). Its activity is regulated as follows. Inhibited by naringenin. Functionally, catalyzes the transport of triglyceride between phospholipid surfaces. Catalyzes the transport of cholesteryl ester, and phospholipid between phospholipid surfaces. Required for the assembly and secretion of plasma lipoproteins that contain apolipoprotein B. Required for yolk lipid utilization and absorption of dietary lipids in larvae. This chain is Microsomal triglyceride transfer protein large subunit, found in Danio rerio (Zebrafish).